Reading from the N-terminus, the 513-residue chain is Meiotically up-regulated gene 133 protein (513 aa).

The protein belongs to the UPF0300 family.

The protein localises to the golgi apparatus. It localises to the vacuole membrane. In terms of biological role, has a role in meiosis. The chain is Meiotically up-regulated gene 133 protein (mug133) from Schizosaccharomyces pombe (strain 972 / ATCC 24843) (Fission yeast).